The chain runs to 436 residues: Enolase (436 aa).

Substrate contacts are provided by H159 and E168. The Proton donor role is filled by E211. Mg(2+) is bound by residues D246, E295, and D322. 2 residues coordinate substrate: E295 and D322. K347 serves as the catalytic Proton acceptor. Substrate is bound by residues 374–377 and K398; that span reads SHRS.

It belongs to the enolase family. In terms of assembly, homodimer. The cofactor is Mg(2+).

It localises to the cytoplasm. It carries out the reaction (2R)-2-phosphoglycerate = phosphoenolpyruvate + H2O. It participates in carbohydrate degradation; glycolysis; pyruvate from D-glyceraldehyde 3-phosphate: step 4/5. The protein is Enolase of Neocallimastix frontalis (Rumen fungus).